Here is a 341-residue protein sequence, read N- to C-terminus: Phosphoribosylformylglycinamidine cyclo-ligase (341 aa).

Belongs to the AIR synthase family.

It is found in the cytoplasm. The catalysed reaction is 2-formamido-N(1)-(5-O-phospho-beta-D-ribosyl)acetamidine + ATP = 5-amino-1-(5-phospho-beta-D-ribosyl)imidazole + ADP + phosphate + H(+). Its pathway is purine metabolism; IMP biosynthesis via de novo pathway; 5-amino-1-(5-phospho-D-ribosyl)imidazole from N(2)-formyl-N(1)-(5-phospho-D-ribosyl)glycinamide: step 2/2. The chain is Phosphoribosylformylglycinamidine cyclo-ligase from Xanthomonas campestris pv. campestris (strain B100).